The primary structure comprises 519 residues: 2-isopropylmalate synthase (519 aa).

Residues 5–267 (VIIFDTTLRD…YTNIHHHEIY (263 aa)) enclose the Pyruvate carboxyltransferase domain. Positions 14, 202, 204, and 238 each coordinate Mn(2+). Residues 392–519 (ALESFHIHST…NHKNTQHIKK (128 aa)) form a regulatory domain region.

The protein belongs to the alpha-IPM synthase/homocitrate synthase family. LeuA type 1 subfamily. Homodimer. It depends on Mn(2+) as a cofactor.

It localises to the cytoplasm. The enzyme catalyses 3-methyl-2-oxobutanoate + acetyl-CoA + H2O = (2S)-2-isopropylmalate + CoA + H(+). It participates in amino-acid biosynthesis; L-leucine biosynthesis; L-leucine from 3-methyl-2-oxobutanoate: step 1/4. In terms of biological role, catalyzes the condensation of the acetyl group of acetyl-CoA with 3-methyl-2-oxobutanoate (2-ketoisovalerate) to form 3-carboxy-3-hydroxy-4-methylpentanoate (2-isopropylmalate). The protein is 2-isopropylmalate synthase of Blochmanniella floridana.